The sequence spans 302 residues: Sulfate adenylyltransferase subunit 2 2 (302 aa).

The protein belongs to the PAPS reductase family. CysD subfamily. In terms of assembly, heterodimer composed of CysD, the smaller subunit, and CysN.

The catalysed reaction is sulfate + ATP + H(+) = adenosine 5'-phosphosulfate + diphosphate. Its pathway is sulfur metabolism; hydrogen sulfide biosynthesis; sulfite from sulfate: step 1/3. Functionally, with CysN forms the ATP sulfurylase (ATPS) that catalyzes the adenylation of sulfate producing adenosine 5'-phosphosulfate (APS) and diphosphate, the first enzymatic step in sulfur assimilation pathway. APS synthesis involves the formation of a high-energy phosphoric-sulfuric acid anhydride bond driven by GTP hydrolysis by CysN coupled to ATP hydrolysis by CysD. The polypeptide is Sulfate adenylyltransferase subunit 2 2 (Alkalilimnicola ehrlichii (strain ATCC BAA-1101 / DSM 17681 / MLHE-1)).